Reading from the N-terminus, the 374-residue chain is Transaldolase (374 aa).

The Schiff-base intermediate with substrate role is filled by Lys140.

It belongs to the transaldolase family. Type 2 subfamily.

It is found in the cytoplasm. It catalyses the reaction D-sedoheptulose 7-phosphate + D-glyceraldehyde 3-phosphate = D-erythrose 4-phosphate + beta-D-fructose 6-phosphate. The protein operates within carbohydrate degradation; pentose phosphate pathway; D-glyceraldehyde 3-phosphate and beta-D-fructose 6-phosphate from D-ribose 5-phosphate and D-xylulose 5-phosphate (non-oxidative stage): step 2/3. In terms of biological role, transaldolase is important for the balance of metabolites in the pentose-phosphate pathway. The protein is Transaldolase of Renibacterium salmoninarum (strain ATCC 33209 / DSM 20767 / JCM 11484 / NBRC 15589 / NCIMB 2235).